The chain runs to 425 residues: Trigger factor (425 aa).

Positions 163 to 248 constitute a PPIase FKBP-type domain; sequence GDTAVIDFEG…IHEIKTKELP (86 aa).

It belongs to the FKBP-type PPIase family. Tig subfamily.

It localises to the cytoplasm. The enzyme catalyses [protein]-peptidylproline (omega=180) = [protein]-peptidylproline (omega=0). Functionally, involved in protein export. Acts as a chaperone by maintaining the newly synthesized protein in an open conformation. Functions as a peptidyl-prolyl cis-trans isomerase. In Bacillus cereus (strain G9842), this protein is Trigger factor.